A 723-amino-acid chain; its full sequence is MQGQTQSISFDGREIRLTTGRYAPQAGGSVMMECGDTAVLVTATRSTGREGIDFLPLICDYEERLYAAGRIPGSFMRREGRPPERATLIARLIDRPMRPLFPSWMRDDLQIVATCLSLDERVPADVLAVTGASMATLLASIPFQGPMAAVRVGLLGDDFVLNPSYREIERGDLDLVVAGTPDGVVMVEAGANQLPQGDVIEAIDFGYEAVCELIKAQQTILKDAGIKQVQPEPPTQDQDTKLSTYLEKNCSKSIGEVLKQFEQTKAERDSKLDAIKAKTAEAIDSLKEDDAVRKSVNANSKVLSNNFKALTKKLMREQIIKQGKRVDGRKLDEVRPISSAAGVLPKRVHGSGLFQRGLTQVLSTATLGTPSDAQEMDDLNPGPEKTYLHHYNFPPYSVGETRPMRSPGRREVGHGSLAERAIIPVLPPKDSFPYVLRVVSEVLSSNGSTSMGSVCGSTLALMDAGVPLKAPVSGAAMGLIKEDAEIRILTDIQGIEDFLGDMDFKVAGTKDGITALQMDMKITGLPVKTIAEAVNQARPARIHILEKMLEAIDAPRTTLSPHAPRLLSFRIDPELIGTVIGPGGRTIKGITERTNTKIDIEDGGIVTIASHDGAAAEAAQRIIEGLTRKVNEGEVFTGTITRIIPIGAFVEILPGKEGMIHISQLSEARVEKVDDVVKVGDQVTVRIREIDNRGRINLTLRGVPQNGEETQSEPAPTPVAPLN.

Residues D497 and D503 each coordinate Mg(2+). One can recognise a KH domain in the interval 564–623; sequence PRLLSFRIDPELIGTVIGPGGRTIKGITERTNTKIDIEDGGIVTIASHDGAAAEAAQRII. One can recognise an S1 motif domain in the interval 633-701; it reads GEVFTGTITR…NRGRINLTLR (69 aa). The segment at 701–723 is disordered; it reads RGVPQNGEETQSEPAPTPVAPLN.

Belongs to the polyribonucleotide nucleotidyltransferase family. The cofactor is Mg(2+).

It localises to the cytoplasm. The enzyme catalyses RNA(n+1) + phosphate = RNA(n) + a ribonucleoside 5'-diphosphate. Its function is as follows. Involved in mRNA degradation. Catalyzes the phosphorolysis of single-stranded polyribonucleotides processively in the 3'- to 5'-direction. The protein is Polyribonucleotide nucleotidyltransferase of Prochlorococcus marinus (strain MIT 9313).